Reading from the N-terminus, the 95-residue chain is UPF0298 protein LVIS_1401 (95 aa).

Belongs to the UPF0298 family.

It localises to the cytoplasm. This chain is UPF0298 protein LVIS_1401, found in Levilactobacillus brevis (strain ATCC 367 / BCRC 12310 / CIP 105137 / JCM 1170 / LMG 11437 / NCIMB 947 / NCTC 947) (Lactobacillus brevis).